An 880-amino-acid polypeptide reads, in one-letter code: Probable LRR receptor-like serine/threonine-protein kinase At2g28960 (880 aa).

Residues 1–24 (MEGRRQRLLVFIFGALAITHLVQA) form the signal peptide. At 25–511 (QPPDQRGFIS…NNNNQTYIVP (487 aa)) the chain is on the extracellular side. N-linked (GlcNAc...) asparagine glycans are attached at residues asparagine 180, asparagine 201, asparagine 228, asparagine 254, asparagine 287, asparagine 403, asparagine 430, and asparagine 441. LRR repeat units follow at residues 409–430 (RIISLDLSSRGLKGVIAPAFQN), 433–455 (ELRKLDLSNNSFTGGVPEFLASM), and 457–476 (SLSIINLNWNDLTGPLPKLL). N-linked (GlcNAc...) asparagine glycosylation occurs at asparagine 505. A helical transmembrane segment spans residues 512 to 532 (VVASVASVLIIIAVLILILVF). Topologically, residues 533-880 (KKRRPTQVDS…FTTEINPKAR (348 aa)) are cytoplasmic. Threonine 564 carries the post-translational modification Phosphothreonine. In terms of domain architecture, Protein kinase spans 573-846 (DNFERVLGEG…QVTNELKQCL (274 aa)). Residues 579–587 (LGEGGFGVV) and lysine 601 contribute to the ATP site. At tyrosine 646 the chain carries Phosphotyrosine. The active-site Proton acceptor is the aspartate 698. The residue at position 732 (serine 732) is a Phosphoserine. Residues threonine 733 and threonine 738 each carry the phosphothreonine modification. Tyrosine 746 bears the Phosphotyrosine mark. The disordered stretch occupies residues 854-880 (GVREDMGSRSSVEMSTSFTTEINPKAR). A compositionally biased stretch (polar residues) spans 861 to 880 (SRSSVEMSTSFTTEINPKAR).

The protein belongs to the protein kinase superfamily. Ser/Thr protein kinase family.

The protein resides in the membrane. The enzyme catalyses L-seryl-[protein] + ATP = O-phospho-L-seryl-[protein] + ADP + H(+). It catalyses the reaction L-threonyl-[protein] + ATP = O-phospho-L-threonyl-[protein] + ADP + H(+). The polypeptide is Probable LRR receptor-like serine/threonine-protein kinase At2g28960 (Arabidopsis thaliana (Mouse-ear cress)).